The chain runs to 703 residues: Fanconi anemia group B protein homolog (703 aa).

As to quaternary structure, belongs to the multisubunit FA complex composed of FANCA, FANCB, FANCC, FANCE, FANCF, FANCG, FANCL/PHF9 and FANCM.

The protein localises to the nucleus. In terms of biological role, DNA repair protein required for FANCD2 ubiquitination. The protein is Fanconi anemia group B protein homolog (Fancb) of Mus musculus (Mouse).